Consider the following 271-residue polypeptide: Chorismate dehydratase (271 aa).

This sequence belongs to the MqnA/MqnD family. MqnA subfamily.

The catalysed reaction is chorismate = 3-[(1-carboxyvinyl)-oxy]benzoate + H2O. Its pathway is quinol/quinone metabolism; menaquinone biosynthesis. Its function is as follows. Catalyzes the dehydration of chorismate into 3-[(1-carboxyvinyl)oxy]benzoate, a step in the biosynthesis of menaquinone (MK, vitamin K2). The sequence is that of Chorismate dehydratase from Thermus thermophilus (strain ATCC 27634 / DSM 579 / HB8).